A 418-amino-acid polypeptide reads, in one-letter code: Tyrosine--tRNA ligase 1 (418 aa).

Position 34 (tyrosine 34) interacts with L-tyrosine. A 'HIGH' region motif is present at residues 39-48 (PTADSLHLGH). Residues tyrosine 169 and glutamine 173 each coordinate L-tyrosine. The 'KMSKS' region motif lies at 229–233 (KFGKS). ATP is bound at residue lysine 232. In terms of domain architecture, S4 RNA-binding spans 352–418 (LNIVELLVNA…GKKKNFVLTY (67 aa)).

It belongs to the class-I aminoacyl-tRNA synthetase family. TyrS type 1 subfamily. As to quaternary structure, homodimer.

It localises to the cytoplasm. It carries out the reaction tRNA(Tyr) + L-tyrosine + ATP = L-tyrosyl-tRNA(Tyr) + AMP + diphosphate + H(+). Its function is as follows. Catalyzes the attachment of tyrosine to tRNA(Tyr) in a two-step reaction: tyrosine is first activated by ATP to form Tyr-AMP and then transferred to the acceptor end of tRNA(Tyr). In Streptococcus thermophilus (strain CNRZ 1066), this protein is Tyrosine--tRNA ligase 1.